The following is a 213-amino-acid chain: Thiamine-phosphate synthase (213 aa).

Residues 38–42 (QLREK) and asparagine 73 contribute to the 4-amino-2-methyl-5-(diphosphooxymethyl)pyrimidine site. Mg(2+) is bound by residues aspartate 74 and aspartate 93. Serine 111 is a 4-amino-2-methyl-5-(diphosphooxymethyl)pyrimidine binding site. 137 to 139 (TTS) contacts 2-[(2R,5Z)-2-carboxy-4-methylthiazol-5(2H)-ylidene]ethyl phosphate. Position 140 (lysine 140) interacts with 4-amino-2-methyl-5-(diphosphooxymethyl)pyrimidine. 2-[(2R,5Z)-2-carboxy-4-methylthiazol-5(2H)-ylidene]ethyl phosphate is bound by residues glycine 169 and 189 to 190 (IS).

It belongs to the thiamine-phosphate synthase family. Mg(2+) is required as a cofactor.

The enzyme catalyses 2-[(2R,5Z)-2-carboxy-4-methylthiazol-5(2H)-ylidene]ethyl phosphate + 4-amino-2-methyl-5-(diphosphooxymethyl)pyrimidine + 2 H(+) = thiamine phosphate + CO2 + diphosphate. The catalysed reaction is 2-(2-carboxy-4-methylthiazol-5-yl)ethyl phosphate + 4-amino-2-methyl-5-(diphosphooxymethyl)pyrimidine + 2 H(+) = thiamine phosphate + CO2 + diphosphate. It carries out the reaction 4-methyl-5-(2-phosphooxyethyl)-thiazole + 4-amino-2-methyl-5-(diphosphooxymethyl)pyrimidine + H(+) = thiamine phosphate + diphosphate. Its pathway is cofactor biosynthesis; thiamine diphosphate biosynthesis; thiamine phosphate from 4-amino-2-methyl-5-diphosphomethylpyrimidine and 4-methyl-5-(2-phosphoethyl)-thiazole: step 1/1. Its function is as follows. Condenses 4-methyl-5-(beta-hydroxyethyl)thiazole monophosphate (THZ-P) and 2-methyl-4-amino-5-hydroxymethyl pyrimidine pyrophosphate (HMP-PP) to form thiamine monophosphate (TMP). The chain is Thiamine-phosphate synthase from Lysinibacillus sphaericus (strain C3-41).